Reading from the N-terminus, the 982-residue chain is Hunchback-like protein (982 aa).

The disordered stretch occupies residues glutamine 87–valine 194. The span at proline 101–glutamate 110 shows a compositional bias: basic and acidic residues. Positions histidine 111–serine 132 are enriched in polar residues. The segment covering cysteine 142–glutamate 152 has biased composition (acidic residues). Basic and acidic residues predominate over residues lysine 153–proline 175. Residues glutamate 176–proline 193 show a composition bias toward polar residues. C2H2-type zinc fingers lie at residues leucine 336–histidine 358, histidine 361–histidine 384, phenylalanine 538–histidine 560, leucine 567–histidine 589, phenylalanine 595–histidine 617, phenylalanine 623–histidine 647, and leucine 734–histidine 756. The tract at residues lysine 377–glycine 415 is disordered. The segment at glutamate 811–alanine 896 is disordered. Composition is skewed to polar residues over residues glycine 816–serine 831 and serine 843–serine 862. Residues alanine 863–proline 875 show a composition bias toward basic and acidic residues. 2 C2H2-type zinc fingers span residues phenylalanine 929–histidine 951 and phenylalanine 957–histidine 981.

It belongs to the hunchback C2H2-type zinc-finger protein family. As to expression, expressed primarily in ectodermal cells during embryonic and larval development.

The protein resides in the nucleus. Required for the late stages of development. Plays a role in the developmental timing of postembryonic hypodermal seam cell fusion events and adult alae production. This is Hunchback-like protein from Caenorhabditis elegans.